The primary structure comprises 376 residues: ORC1-type DNA replication protein 2 (376 aa).

Residues 73–77 (TGKTS), Tyr209, and Arg221 contribute to the ATP site.

It belongs to the CDC6/cdc18 family.

In terms of biological role, involved in regulation of DNA replication. This chain is ORC1-type DNA replication protein 2 (cdc6-2), found in Archaeoglobus fulgidus (strain ATCC 49558 / DSM 4304 / JCM 9628 / NBRC 100126 / VC-16).